The primary structure comprises 806 residues: Acetyl-CoA decarbonylase/synthase complex subunit alpha 1 (806 aa).

The [4Fe-4S] cluster site is built by C73, C76, C77, C79, C84, and C94. H117 contacts CO. H250, C278, and C323 together coordinate [Ni-4Fe-4S] cluster. 4Fe-4S ferredoxin-type domains lie at 406–436 (SDEQ…IPEA) and 445–475 (FSYL…LSVI). Positions 417, 420, 423, 427, 455, 458, 461, and 465 each coordinate [4Fe-4S] cluster. Positions 523, 552, and 587 each coordinate [Ni-4Fe-4S] cluster.

This sequence belongs to the Ni-containing carbon monoxide dehydrogenase family. In terms of assembly, heterotetramer of two alpha and two epsilon subunits. The ACDS complex is made up of alpha, epsilon, beta, gamma and delta subunits with a probable stoichiometry of (alpha(2)epsilon(2))(4)-beta(8)-(gamma(1)delta(1))(8). Requires [4Fe-4S] cluster as cofactor. The cofactor is [Ni-4Fe-4S] cluster.

The catalysed reaction is CO + 2 oxidized [2Fe-2S]-[ferredoxin] + H2O = 2 reduced [2Fe-2S]-[ferredoxin] + CO2 + 2 H(+). The protein operates within one-carbon metabolism; methanogenesis from acetate. Its function is as follows. Part of the ACDS complex that catalyzes the reversible cleavage of acetyl-CoA, allowing growth on acetate as sole source of carbon and energy. The alpha-epsilon subcomponent functions as a carbon monoxide dehydrogenase. This is Acetyl-CoA decarbonylase/synthase complex subunit alpha 1 from Methanosarcina mazei (strain ATCC BAA-159 / DSM 3647 / Goe1 / Go1 / JCM 11833 / OCM 88) (Methanosarcina frisia).